The chain runs to 368 residues: Biglycan (368 aa).

An N-terminal signal peptide occupies residues 1–16 (MKVLLLLCSCILVIHA). The propeptide occupies 17-37 (LPFEQRGFWDFSMDDGMAMMK). Intrachain disulfides connect Cys-63/Cys-69 and Cys-67/Cys-76. LRR repeat units lie at residues 82–102 (TSIP…NNKI), 103–126 (TEIK…NNKI), 127–150 (SKIN…KNNL), 151–171 (EEIP…ENKI), 172–195 (KKVP…GNPL), 196–220 (ENGG…EAKL), 221–241 (SGIP…NNKI), 242–265 (QAIE…HNNI), 266–289 (RMIE…NNKL), 290–312 (SKVP…SNNI), 313–342 (TQVG…NNPV), and 343–368 (PYWE…NYRK). N-linked (GlcNAc...) asparagine glycosylation is found at Asn-270 and Asn-311. Cys-321 and Cys-354 form a disulfide bridge.

This sequence belongs to the small leucine-rich proteoglycan (SLRP) family. SLRP class I subfamily.

It is found in the secreted. Its subcellular location is the extracellular space. The protein resides in the extracellular matrix. May be involved in collagen fiber assembly. This is Biglycan (bgn) from Xenopus laevis (African clawed frog).